We begin with the raw amino-acid sequence, 250 residues long: Coproheme decarboxylase (250 aa).

Fe-coproporphyrin III is bound by residues arginine 131, 145–149 (YPMNK), histidine 172, and glutamine 185. Tyrosine 145 is a catalytic residue.

The protein belongs to the ChdC family. Type 1 subfamily. Requires Fe-coproporphyrin III as cofactor.

It carries out the reaction Fe-coproporphyrin III + 2 H2O2 + 2 H(+) = heme b + 2 CO2 + 4 H2O. It catalyses the reaction Fe-coproporphyrin III + H2O2 + H(+) = harderoheme III + CO2 + 2 H2O. The catalysed reaction is harderoheme III + H2O2 + H(+) = heme b + CO2 + 2 H2O. The protein operates within porphyrin-containing compound metabolism; protoheme biosynthesis. Involved in coproporphyrin-dependent heme b biosynthesis. Catalyzes the decarboxylation of Fe-coproporphyrin III (coproheme) to heme b (protoheme IX), the last step of the pathway. The reaction occurs in a stepwise manner with a three-propionate intermediate. The polypeptide is Coproheme decarboxylase (Staphylococcus aureus (strain MSSA476)).